The primary structure comprises 229 residues: Cytochrome c oxidase subunit 2 (229 aa).

Topologically, residues methionine 1–tyrosine 26 are mitochondrial intermembrane. A helical transmembrane segment spans residues threonine 27–serine 48. The Mitochondrial matrix segment spans residues serine 49–glutamate 62. A helical membrane pass occupies residues threonine 63–glutamine 82. At leucine 83 to glutamate 229 the chain is on the mitochondrial intermembrane side. 6 residues coordinate Cu cation: histidine 161, cysteine 196, glutamate 198, cysteine 200, histidine 204, and methionine 207. Glutamate 198 provides a ligand contact to Mg(2+).

Belongs to the cytochrome c oxidase subunit 2 family. In terms of assembly, component of the cytochrome c oxidase (complex IV, CIV), a multisubunit enzyme composed of a catalytic core of 3 subunits and several supernumerary subunits. The complex exists as a monomer or a dimer and forms supercomplexes (SCs) in the inner mitochondrial membrane with ubiquinol-cytochrome c oxidoreductase (cytochrome b-c1 complex, complex III, CIII). Cu cation serves as cofactor.

The protein resides in the mitochondrion inner membrane. It catalyses the reaction 4 Fe(II)-[cytochrome c] + O2 + 8 H(+)(in) = 4 Fe(III)-[cytochrome c] + 2 H2O + 4 H(+)(out). Functionally, component of the cytochrome c oxidase, the last enzyme in the mitochondrial electron transport chain which drives oxidative phosphorylation. The respiratory chain contains 3 multisubunit complexes succinate dehydrogenase (complex II, CII), ubiquinol-cytochrome c oxidoreductase (cytochrome b-c1 complex, complex III, CIII) and cytochrome c oxidase (complex IV, CIV), that cooperate to transfer electrons derived from NADH and succinate to molecular oxygen, creating an electrochemical gradient over the inner membrane that drives transmembrane transport and the ATP synthase. Cytochrome c oxidase is the component of the respiratory chain that catalyzes the reduction of oxygen to water. Electrons originating from reduced cytochrome c in the intermembrane space (IMS) are transferred via the dinuclear copper A center (CU(A)) of subunit 2 and heme A of subunit 1 to the active site in subunit 1, a binuclear center (BNC) formed by heme A3 and copper B (CU(B)). The BNC reduces molecular oxygen to 2 water molecules using 4 electrons from cytochrome c in the IMS and 4 protons from the mitochondrial matrix. This chain is Cytochrome c oxidase subunit 2 (COII), found in Pisaster ochraceus (Ochre sea star).